The primary structure comprises 285 residues: Iodotyrosine deiodinase 1 (285 aa).

Residues 1–21 traverse the membrane as a helical segment; the sequence is MFLLTPVLVAVVCILVVWVFK. FMN is bound by residues 96–100 and 124–125; these read RRSVR and SG. 3,5-diiodo-L-tyrosine contacts are provided by alanine 126, glutamate 153, tyrosine 157, and lysine 178. 4 residues coordinate 3-iodo-L-tyrosine: alanine 126, glutamate 153, tyrosine 157, and lysine 178. FMN is bound by residues 233-235 and arginine 275; that span reads TTT.

It belongs to the nitroreductase family. As to quaternary structure, homodimer. FMN is required as a cofactor.

The protein resides in the cell membrane. The protein localises to the cytoplasmic vesicle membrane. The catalysed reaction is 2 iodide + L-tyrosine + 2 NADP(+) = 3,5-diiodo-L-tyrosine + 2 NADPH + H(+). It carries out the reaction iodide + L-tyrosine + NADP(+) = 3-iodo-L-tyrosine + NADPH. The enzyme catalyses 3-iodo-L-tyrosine + iodide + NADP(+) = 3,5-diiodo-L-tyrosine + NADPH + H(+). It catalyses the reaction L-tyrosine + chloride + NADP(+) = 3-chloro-L-tyrosine + NADPH. The catalysed reaction is bromide + L-tyrosine + NADP(+) = 3-bromo-L-tyrosine + NADPH. Its function is as follows. Catalyzes the dehalogenation of halotyrosines such as 3-bromo-L-tyrosine, 3-chloro-L-tyrosine, 3-iodo-L-tyrosine and 3,5-diiodo-L-tyrosine. During thyroid hormone biosynthesis, facilitates iodide salvage by catalysing the oxidative NADPH-dependent deiodination of the halogenated by-products of thyroid hormone production, monoiodotyrosine (L-MIT) and diiodotyrosine (L-DIT). The scavanged iodide can then reenter the hormone-producing pathways. Acts more efficiently on 3-iodo-L-tyrosine than 3,5-diiodo-L-tyrosine. In Mus musculus (Mouse), this protein is Iodotyrosine deiodinase 1 (Iyd).